A 414-amino-acid polypeptide reads, in one-letter code: Protein DNA-DAMAGE INDUCIBLE 1 (414 aa).

The region spanning 1-76 (MRITVMTAGE…LMMMVSNASS (76 aa)) is the Ubiquitin-like domain. Positions 213 to 292 (LKAFVDSGAQ…NMEFLFGLDM (80 aa)) constitute a Peptidase A2 domain. Residue D218 is part of the active site. The disordered stretch occupies residues 332-374 (ERVPNDASSSGATVPSGFTEKKNNTVANPTSQQPKRQNTSEGP). Polar residues predominate over residues 355-372 (NTVANPTSQQPKRQNTSE). The UBA domain maps to 374–414 (PEFEAKIAKLVELGFSRDSVIQALKLFEGNEEQAAGFLFGG).

Belongs to the DDI1 family. As to quaternary structure, homodimer.

It is found in the cytoplasm. The protein localises to the cytosol. Functionally, receptor of ubiquitinated protein targeted to ubiquitin/proteasome-mediated proteolysis (UPP). Relatively weak affinity for both 'Lys-48'- and 'Lys-63'-linked ubiquitin chains with a slight preference for 'Lys-48-'linked chains of three or more ubiquitin units. The polypeptide is Protein DNA-DAMAGE INDUCIBLE 1 (Arabidopsis thaliana (Mouse-ear cress)).